The primary structure comprises 505 residues: Aminoaldehyde dehydrogenase 1a (505 aa).

A Na(+)-binding site is contributed by D101. NAD(+)-binding positions include 161–163 (TPW) and 187–190 (KPSE). Residue L191 participates in Na(+) binding. NAD(+)-binding positions include 241–244 (SFET) and E262. E262 serves as the catalytic Proton acceptor. Residue C296 is the Nucleophile of the active site. NAD(+) is bound by residues E395 and W461.

The protein belongs to the aldehyde dehydrogenase family. In terms of assembly, forms homodimers.

The enzyme catalyses 4-aminobutanal + NAD(+) + H2O = 4-aminobutanoate + NADH + 2 H(+). The catalysed reaction is 3-aminopropanal + NAD(+) + H2O = beta-alanine + NADH + 2 H(+). It catalyses the reaction 4-(trimethylamino)butanal + NAD(+) + H2O = 4-(trimethylamino)butanoate + NADH + 2 H(+). It carries out the reaction 4-guanidinobutanal + NAD(+) + H2O = 4-guanidinobutanoate + NADH + 2 H(+). The enzyme catalyses betaine aldehyde + NAD(+) + H2O = glycine betaine + NADH + 2 H(+). It functions in the pathway amine and polyamine biosynthesis; betaine biosynthesis via choline pathway; betaine from betaine aldehyde: step 1/1. In terms of biological role, dehydrogenase that catalyzes the oxidation of several aminoaldehydes. Metabolizes and detoxifies aldehyde products of polyamine degradation to non-toxic amino acids. Catalyzes the oxidation of 4-aminobutanal and 3-aminopropanal to 4-aminobutanoate and beta-alanine, respectively. Catalyzes the oxidation of 4-(trimethylamino)butanal and 4-guanidinobutanal to 4-trimethylammoniobutanoate and 4-guanidinobutanoate, respectively. Catalyzes the oxidation of betaine aldehyde to glycine betaine. Dehydrogenase that catalyzes the oxidation of several aminoaldehydes. Catalyzes the oxidation of betaine aldehyde to glycine betaine. Catalyzes the oxidation of 4-(trimethylamino)butanal to 4-trimethylammoniobutanoate. In Zea mays (Maize), this protein is Aminoaldehyde dehydrogenase 1a.